Reading from the N-terminus, the 410-residue chain is Argininosuccinate synthase (410 aa).

ATP is bound by residues 11–19 and Ala-37; that span reads AYSGGLDTS. L-citrulline contacts are provided by Tyr-88 and Ser-93. 116-124 is an ATP binding site; that stretch reads SHGCTGKGN. Positions 120, 124, and 125 each coordinate L-aspartate. Residue Asn-124 coordinates L-citrulline. L-citrulline-binding residues include Arg-128, Ser-181, Ser-190, Glu-269, and Tyr-281.

The protein belongs to the argininosuccinate synthase family. Type 1 subfamily. As to quaternary structure, homotetramer.

It localises to the cytoplasm. The catalysed reaction is L-citrulline + L-aspartate + ATP = 2-(N(omega)-L-arginino)succinate + AMP + diphosphate + H(+). Its pathway is amino-acid biosynthesis; L-arginine biosynthesis; L-arginine from L-ornithine and carbamoyl phosphate: step 2/3. The sequence is that of Argininosuccinate synthase (arg12) from Schizosaccharomyces pombe (strain 972 / ATCC 24843) (Fission yeast).